A 526-amino-acid chain; its full sequence is Lysine--tRNA ligase (526 aa).

Mg(2+)-binding residues include Glu-431 and Glu-438.

This sequence belongs to the class-II aminoacyl-tRNA synthetase family. In terms of assembly, homodimer. The cofactor is Mg(2+).

It is found in the cytoplasm. It catalyses the reaction tRNA(Lys) + L-lysine + ATP = L-lysyl-tRNA(Lys) + AMP + diphosphate. In Chlamydia felis (strain Fe/C-56) (Chlamydophila felis), this protein is Lysine--tRNA ligase.